Consider the following 390-residue polypeptide: 1-deoxy-D-xylulose 5-phosphate reductoisomerase (390 aa).

Residues Thr10, Gly11, Ser12, Ile13, Ala36, Lys37, Asn38, and Asn122 each contribute to the NADPH site. Residue Lys123 coordinates 1-deoxy-D-xylulose 5-phosphate. Glu124 serves as a coordination point for NADPH. Asp148 is a binding site for Mn(2+). 1-deoxy-D-xylulose 5-phosphate contacts are provided by Ser149, Glu150, Ser174, and His197. A Mn(2+)-binding site is contributed by Glu150. Residue Gly203 participates in NADPH binding. 1-deoxy-D-xylulose 5-phosphate is bound by residues Ser210, Asn215, Lys216, and Glu219. A Mn(2+)-binding site is contributed by Glu219.

The protein belongs to the DXR family. Mg(2+) serves as cofactor. The cofactor is Mn(2+).

The enzyme catalyses 2-C-methyl-D-erythritol 4-phosphate + NADP(+) = 1-deoxy-D-xylulose 5-phosphate + NADPH + H(+). It functions in the pathway isoprenoid biosynthesis; isopentenyl diphosphate biosynthesis via DXP pathway; isopentenyl diphosphate from 1-deoxy-D-xylulose 5-phosphate: step 1/6. Its function is as follows. Catalyzes the NADPH-dependent rearrangement and reduction of 1-deoxy-D-xylulose-5-phosphate (DXP) to 2-C-methyl-D-erythritol 4-phosphate (MEP). The protein is 1-deoxy-D-xylulose 5-phosphate reductoisomerase of Trichlorobacter lovleyi (strain ATCC BAA-1151 / DSM 17278 / SZ) (Geobacter lovleyi).